The following is a 612-amino-acid chain: uncharacterized protein (612 aa).

Disordered stretches follow at residues 46-113, 129-185, 313-360, 457-488, and 593-612; these read QQPQ…MVTP, QQYQ…TPTY, TKDG…GSTM, FSISGGGGSGGIPSQSGIIKKHKKPSGSSGYG, and NNTNNTNNTNNTNNNTVVTI. Low complexity predominate over residues 58-102; that stretch reads HQQIPISTQSTPNSTSSTTTTTTTTTSTTTAPTSNSKKSKTTPSN. Polar residues-rich tracts occupy residues 103–113 and 129–138; these read GNKPTSGMVTP and QQYQPNSQLQ. Residues 143-169 are compositionally biased toward low complexity; the sequence is IIKKSSLSTTPNNINNNNNNNNNTNTI. Residues 175–185 are compositionally biased toward polar residues; the sequence is GGNNSAPTPTY. A compositionally biased stretch (low complexity) spans 323–359; it reads TTSSTSTSSSATSTTSSSTSSTTTTSSTSNSSTPGST.

This is an uncharacterized protein from Dictyostelium discoideum (Social amoeba).